A 269-amino-acid polypeptide reads, in one-letter code: Microtubule-associated protein RP/EB family member 1 (269 aa).

Residues 14-116 form the Calponin-homology (CH) domain; the sequence is NLSRHDMLAW…FVQWFKKFFD (103 aa). The segment at 168–190 is disordered; the sequence is RTAVSNKPPAQGISKKPATVGNG. The 71-residue stretch at 186–256 folds into the EB1 C-terminal domain; sequence TVGNGDDESA…LYATDEGFVI (71 aa).

This sequence belongs to the MAPRE family.

The protein localises to the cytoplasm. It localises to the cytoskeleton. Its subcellular location is the microtubule organizing center. The protein resides in the centrosome. It is found in the golgi apparatus. The protein localises to the spindle. It localises to the spindle pole. Functionally, plus-end tracking protein (+TIP) that binds to the plus-end of microtubules and regulates the dynamics of the microtubule cytoskeleton. Promotes cytoplasmic microtubule nucleation and elongation. Involved in mitotic spindle positioning by stabilizing microtubules and promoting dynamic connection between astral microtubules and the cortex during mitotic chromosome segregation. This is Microtubule-associated protein RP/EB family member 1 (mapre1) from Xenopus tropicalis (Western clawed frog).